We begin with the raw amino-acid sequence, 356 residues long: UDP-N-acetylglucosamine--N-acetylmuramyl-(pentapeptide) pyrophosphoryl-undecaprenol N-acetylglucosamine transferase (356 aa).

UDP-N-acetyl-alpha-D-glucosamine contacts are provided by residues 15-17 (TGG), Asn-127, Arg-163, Ser-191, Ile-244, 263-268 (ALTVSE), and Gln-288.

This sequence belongs to the glycosyltransferase 28 family. MurG subfamily.

The protein localises to the cell inner membrane. The catalysed reaction is di-trans,octa-cis-undecaprenyl diphospho-N-acetyl-alpha-D-muramoyl-L-alanyl-D-glutamyl-meso-2,6-diaminopimeloyl-D-alanyl-D-alanine + UDP-N-acetyl-alpha-D-glucosamine = di-trans,octa-cis-undecaprenyl diphospho-[N-acetyl-alpha-D-glucosaminyl-(1-&gt;4)]-N-acetyl-alpha-D-muramoyl-L-alanyl-D-glutamyl-meso-2,6-diaminopimeloyl-D-alanyl-D-alanine + UDP + H(+). The protein operates within cell wall biogenesis; peptidoglycan biosynthesis. Cell wall formation. Catalyzes the transfer of a GlcNAc subunit on undecaprenyl-pyrophosphoryl-MurNAc-pentapeptide (lipid intermediate I) to form undecaprenyl-pyrophosphoryl-MurNAc-(pentapeptide)GlcNAc (lipid intermediate II). The sequence is that of UDP-N-acetylglucosamine--N-acetylmuramyl-(pentapeptide) pyrophosphoryl-undecaprenol N-acetylglucosamine transferase from Yersinia pestis bv. Antiqua (strain Antiqua).